The primary structure comprises 563 residues: Glucocorticoid modulatory element-binding protein 1 (563 aa).

Residue alanine 2 is modified to N-acetylalanine. An SAND domain is found at 72–156; the sequence is ASTIEANEDM…RKMMDSGQID (85 aa). Cysteine 103 is a binding site for Zn(2+). 4 residues coordinate DNA: lysine 129, lysine 133, lysine 136, and arginine 147. Histidine 160, cysteine 164, and cysteine 168 together coordinate Zn(2+). The stretch at 304–355 forms a coiled coil; it reads MDTVKKVLDNRKNQVEQGEEQFLYTLTDLERQLEEQKKQAQDHRLKSQTVQN. Positions 360-385 are disordered; sequence PVSTPKPPKRPRLQRPASTTVLSPSP.

Homodimer, and heterodimer of GMEB1 and GMEB2. Interacts with TRIM63. Interacts with the glucocorticoid receptor (NR3C1) and NCOA2/TIF2. May interact with HSP27 and CREB-binding protein (CBP).

It is found in the nucleus. It localises to the cytoplasm. In terms of biological role, trans-acting factor that binds to glucocorticoid modulatory elements (GME) present in the TAT (tyrosine aminotransferase) promoter and increases sensitivity to low concentrations of glucocorticoids. Also binds to the transferrin receptor promoter. This is Glucocorticoid modulatory element-binding protein 1 (GMEB1) from Bos taurus (Bovine).